The chain runs to 985 residues: Exocyst complex component 4 (985 aa).

The stretch at Ser36–Gln70 forms a coiled coil. Residues Ser235, Ser456, Ser459, Ser682, and Ser686 each carry the phosphoserine modification. Residues Asp434–Phe480 form a disordered region.

This sequence belongs to the SEC8 family. In terms of assembly, the exocyst complex is composed of Sec3/Exoc1, Sec5/Exoc2, Sec6/Exoc3, Sec8/Exoc4, Sec10/Exoc5, Sec15/Exoc6, exo70/Exoc7 and Exo84/Exoc8. In terms of tissue distribution, abundant in the embryonic and larval glutamatergic neuromuscular junctions (NMJs), pre and postsynaptically.

In terms of biological role, component of the exocyst complex involved in the docking of exocytic vesicles with fusion sites on the plasma membrane. Involved in regulation of synaptic microtubule formation, and also regulation of synaptic growth and glutamate receptor trafficking. Does not appear to be required for basal neurotransmission. The polypeptide is Exocyst complex component 4 (Drosophila melanogaster (Fruit fly)).